The primary structure comprises 220 residues: Uracil-DNA glycosylase (220 aa).

Catalysis depends on aspartate 65, which acts as the Proton acceptor.

This sequence belongs to the uracil-DNA glycosylase (UDG) superfamily. UNG family.

The protein localises to the cytoplasm. It carries out the reaction Hydrolyzes single-stranded DNA or mismatched double-stranded DNA and polynucleotides, releasing free uracil.. Functionally, excises uracil residues from the DNA which can arise as a result of misincorporation of dUMP residues by DNA polymerase or due to deamination of cytosine. This is Uracil-DNA glycosylase from Bacteroides thetaiotaomicron (strain ATCC 29148 / DSM 2079 / JCM 5827 / CCUG 10774 / NCTC 10582 / VPI-5482 / E50).